The chain runs to 164 residues: MAKKKTQQKTNAMRMVEQHKVPYKEYEFAWSEDHLSAESVAESLGIEKGRIFKTLVTVGNKTGPVVAVIPGNQELDLKKLAKASGNKKVEMLHLKDLEATTGYIRGGCSPIGMKKQFPTYLAEEAQQYSAIIVSAGKRGMQIELAPEAILSLTNGQFAEITTKE.

This sequence belongs to the prolyl-tRNA editing family. YbaK/EbsC subfamily.

Functionally, affects the expression of the receptor, named binding substance, that mediates mating aggregate formation. Could be a regulatory protein that suppresses the function or expression of ebsA and/or ebsMB. This chain is Putative Cys-tRNA(Pro)/Cys-tRNA(Cys) deacylase EbsC, found in Enterococcus faecalis (strain ATCC 700802 / V583).